A 165-amino-acid chain; its full sequence is Lipoprotein signal peptidase (165 aa).

The next 3 membrane-spanning stretches (helical) occupy residues 6 to 26 (SSVE…LLII), 68 to 88 (GKID…LFYF), and 95 to 115 (ISFL…GNMI). Residues Asp-125 and Asp-141 contribute to the active site. The helical transmembrane segment at 132-152 (IWSFIFNFADVWINIGVVLII) threads the bilayer.

This sequence belongs to the peptidase A8 family.

Its subcellular location is the cell inner membrane. It carries out the reaction Release of signal peptides from bacterial membrane prolipoproteins. Hydrolyzes -Xaa-Yaa-Zaa-|-(S,diacylglyceryl)Cys-, in which Xaa is hydrophobic (preferably Leu), and Yaa (Ala or Ser) and Zaa (Gly or Ala) have small, neutral side chains.. It functions in the pathway protein modification; lipoprotein biosynthesis (signal peptide cleavage). Functionally, this protein specifically catalyzes the removal of signal peptides from prolipoproteins. This Fusobacterium nucleatum subsp. nucleatum (strain ATCC 25586 / DSM 15643 / BCRC 10681 / CIP 101130 / JCM 8532 / KCTC 2640 / LMG 13131 / VPI 4355) protein is Lipoprotein signal peptidase.